Here is a 259-residue protein sequence, read N- to C-terminus: Tryptophan synthase alpha chain (259 aa).

Residues E35 and D46 each act as proton acceptor in the active site.

It belongs to the TrpA family. As to quaternary structure, tetramer of two alpha and two beta chains.

It catalyses the reaction (1S,2R)-1-C-(indol-3-yl)glycerol 3-phosphate + L-serine = D-glyceraldehyde 3-phosphate + L-tryptophan + H2O. It participates in amino-acid biosynthesis; L-tryptophan biosynthesis; L-tryptophan from chorismate: step 5/5. Its function is as follows. The alpha subunit is responsible for the aldol cleavage of indoleglycerol phosphate to indole and glyceraldehyde 3-phosphate. In Methanococcus maripaludis (strain C5 / ATCC BAA-1333), this protein is Tryptophan synthase alpha chain.